The primary structure comprises 71 residues: Brevinin-1E (71 aa).

The signal sequence occupies residues 1 to 22; it reads MFTLKKSMLLLFFLGTINLSLC. A propeptide spanning residues 23-45 is cleaved from the precursor; it reads EEERDADEEERRDNPDESEVEVE. Residues cysteine 65 and cysteine 71 are joined by a disulfide bond.

It belongs to the frog skin active peptide (FSAP) family. Brevinin subfamily. As to expression, expressed by the skin glands.

The protein localises to the secreted. Shows antibacterial activity against representative Gram-negative and Gram-positive bacterial species, and a very high hemolytic activity. This Pelophylax lessonae (Pool frog) protein is Brevinin-1E.